The chain runs to 307 residues: Histone deacetylase HDT1 (307 aa).

Residues 98 to 112 (EDEMDLDSEDEDEEL) show a composition bias toward acidic residues. The segment at 98 to 280 (EDEMDLDSED…KSGGSVPCKP (183 aa)) is disordered. Residues 119–132 (ENGKADEKKQKSQE) show a composition bias toward basic and acidic residues. The segment covering 151–197 (DDDSDEDETDDSDEDETDDSDEGLSSEEGDDDSSDEDDTSDDEEEDT) has biased composition (acidic residues). Residues 198-211 (PTPKKPEVGKKRPA) show a composition bias toward basic and acidic residues. A compositionally biased stretch (low complexity) spans 265–277 (SPKSAPKSGGSVP). The C2H2-type; degenerate zinc finger occupies 276-299 (VPCKPCSKSFISETALQAHSRAKM).

It belongs to the histone deacetylase HD2 family. As to quaternary structure, multimer. Isolated as a trimer composed of 3 proteins of 39, 42 and 45 kDa, possibly a homotrimer with different phosphorylation status or a heterotrimer with HDT2 and/or HDT3. Post-translationally, the N-terminus is blocked. Phosphorylated. Required for enzyme activity.

The protein localises to the nucleus. The protein resides in the nucleolus. With respect to regulation, inhibited by 3-(4-Aroyl-1-methyl-1H-pyrrol-2-yl)-N-hydroxy-2-propenamides. 3-(1-methyl-4-phenylacetyl-1H-pyrrol-2-yl)-N-hydroxy-2-propenamide 1b and 3-[1-methyl-4-(3-phenyl-2-propenoyl)-1H-pyrrol-2-yl]-N-hydroxy-2-propenamide 1c are very potent inhibitors. Functionally, mediates the deacetylation of lysine residues on the N-terminal part of the core histones (H2A, H2B, H3 and H4). Histone deacetylation gives a tag for epigenetic repression and plays an important role in transcriptional regulation, cell cycle progression and developmental events. Able to deacetylate all 4 core histones. The chain is Histone deacetylase HDT1 (HDT1) from Zea mays (Maize).